A 360-amino-acid chain; its full sequence is D-alanine--D-alanine ligase (360 aa).

The ATP-grasp domain maps to 146 to 352 (KICAEHAGLH…FSQLIDRLLQ (207 aa)). Residue 179 to 234 (LEEFTLPFFVKPASQGSSIGITKVHRPEELAAALEKAFMVDTKVLIEKTIEGREIE) coordinates ATP. Mg(2+) is bound by residues D305, E319, and N321.

Belongs to the D-alanine--D-alanine ligase family. Mg(2+) serves as cofactor. It depends on Mn(2+) as a cofactor.

Its subcellular location is the cytoplasm. It carries out the reaction 2 D-alanine + ATP = D-alanyl-D-alanine + ADP + phosphate + H(+). Its pathway is cell wall biogenesis; peptidoglycan biosynthesis. Its function is as follows. Cell wall formation. The sequence is that of D-alanine--D-alanine ligase from Prosthecochloris aestuarii (strain DSM 271 / SK 413).